Reading from the N-terminus, the 898-residue chain is Endoplasmic reticulum metallopeptidase 1 (898 aa).

Methionine 1 is subject to N-acetylmethionine. Residues 1–55 (MEWSSESAAVRRHRGTAERREGEAAASHRQREASAQEDAKGVGRMWGKTENGGGS) are disordered. The Cytoplasmic portion of the chain corresponds to 1–66 (MEWSSESAAV…VAKTALSEAR (66 aa)). Residues 29–41 (RQREASAQEDAKG) show a composition bias toward basic and acidic residues. Residues 67 to 87 (TALALALYLLALRALVQLSLQ) form a helical membrane-spanning segment. Topologically, residues 88–393 (RLVLSRTSGL…SSSEYRHGSM (306 aa)) are lumenal. Residue asparagine 176 is glycosylated (N-linked (GlcNAc...) asparagine). Residues cysteine 198 and cysteine 216 are joined by a disulfide bond. 2 residues coordinate Zn(2+): histidine 199 and aspartate 211. Glutamate 245 serves as the catalytic Proton acceptor. Zn(2+) is bound by residues glutamate 246, glutamate 272, and histidine 348. Residues 394–414 (VFFDVLGLLVIAYPSRVGSII) form a helical membrane-spanning segment. Topologically, residues 415 to 451 (NYMVVMAVVLYLGKKLLRPKHRNANYMRDFLCGLGIT) are cytoplasmic. Residues 452–472 (FISWFTSLVTVLIIAVFISLI) form a helical membrane-spanning segment. Over 473 to 480 (GQSLSWYN) the chain is Lumenal. Residues 481–501 (YFYIAVCLYGTATVAKIIFIH) form a helical membrane-spanning segment. The Cytoplasmic segment spans residues 502–515 (TLAKRFYYMNASDL). The chain crosses the membrane as a helical span at residues 516–538 (YLGELFFDTSLFVHCAFLVALTY). The Lumenal portion of the chain corresponds to 539–542 (QGFC). A helical membrane pass occupies residues 543 to 562 (SAFMSAVWVVFPLLTKLCVY). Residues 563–573 (KDFKKHGAQGR) lie on the Cytoplasmic side of the membrane. Residues 574 to 594 (FVALYLLGMFIPYLYGLYLIW) form a helical membrane-spanning segment. The Lumenal portion of the chain corresponds to 595–615 (AVFEMFTPILGRSGSEIPPDV). A helical membrane pass occupies residues 616–636 (VLASILAVCVMILSSYFITFI). At 637 to 645 (YLVNSTKKT) the chain is on the cytoplasmic side. A helical transmembrane segment spans residues 646 to 666 (ILTLILVCAVTFLLVCSGAFF). Residues 667-898 (PYSSNPESPK…WVSTYSLFVF (232 aa)) are Lumenal-facing. N-linked (GlcNAc...) asparagine glycosylation is present at asparagine 724.

Belongs to the peptidase M28 family. The cofactor is Zn(2+).

The protein localises to the endoplasmic reticulum membrane. Its function is as follows. Within the ovary, required for the organization of somatic cells and oocytes into discrete follicular structures. This chain is Endoplasmic reticulum metallopeptidase 1, found in Mus musculus (Mouse).